The primary structure comprises 115 residues: U3-lycotoxin-Ls1h (115 aa).

The N-terminal stretch at 1-20 is a signal peptide; the sequence is MKFVLLFGVFLVTLFSYSSA. Residues 21 to 44 constitute a propeptide that is removed on maturation; sequence EMLDDFDQADEDELLSLIEKEEAR. Disulfide bonds link Cys-48-Cys-63, Cys-55-Cys-72, Cys-62-Cys-87, and Cys-74-Cys-85.

Belongs to the neurotoxin 19 (CSTX) family. 01 subfamily. In terms of tissue distribution, expressed by the venom gland.

It localises to the secreted. The protein is U3-lycotoxin-Ls1h of Lycosa singoriensis (Wolf spider).